The chain runs to 255 residues: Hydroxyacylglutathione hydrolase (255 aa).

Zn(2+) is bound by residues histidine 56, histidine 58, aspartate 60, histidine 61, histidine 114, aspartate 133, and histidine 171.

It belongs to the metallo-beta-lactamase superfamily. Glyoxalase II family. As to quaternary structure, monomer. Requires Zn(2+) as cofactor.

It carries out the reaction an S-(2-hydroxyacyl)glutathione + H2O = a 2-hydroxy carboxylate + glutathione + H(+). It functions in the pathway secondary metabolite metabolism; methylglyoxal degradation; (R)-lactate from methylglyoxal: step 2/2. Functionally, thiolesterase that catalyzes the hydrolysis of S-D-lactoyl-glutathione to form glutathione and D-lactic acid. The protein is Hydroxyacylglutathione hydrolase of Cereibacter sphaeroides (strain ATCC 17029 / ATH 2.4.9) (Rhodobacter sphaeroides).